Consider the following 83-residue polypeptide: Large ribosomal subunit protein bL31 (83 aa).

This sequence belongs to the bacterial ribosomal protein bL31 family. Type A subfamily. In terms of assembly, part of the 50S ribosomal subunit.

Its function is as follows. Binds the 23S rRNA. This chain is Large ribosomal subunit protein bL31, found in Gloeothece citriformis (strain PCC 7424) (Cyanothece sp. (strain PCC 7424)).